The chain runs to 78 residues: Serine--glyoxylate aminotransferase (78 aa).

This sequence belongs to the class-V pyridoxal-phosphate-dependent aminotransferase family. As to quaternary structure, homodimer. Pyridoxal 5'-phosphate is required as a cofactor. Expressed in leaves but not in root tissue or seedlings.

The protein localises to the peroxisome. The catalysed reaction is glyoxylate + L-serine = 3-hydroxypyruvate + glycine. It carries out the reaction glyoxylate + L-alanine = glycine + pyruvate. Its activity is regulated as follows. Inhibited by aminooxyacetate. The chain is Serine--glyoxylate aminotransferase from Triticum aestivum (Wheat).